A 176-amino-acid chain; its full sequence is HTH-type transcriptional regulator DctR (176 aa).

In terms of domain architecture, HTH luxR-type spans 109–174; that stretch reads VPEANVSLSR…ELVRHQHIDY (66 aa). Positions 133 to 152 form a DNA-binding region, H-T-H motif; it reads TEDILEKLKISLKTFYCHKH.

Functionally, may act as a transcriptional regulator of dctA. The polypeptide is HTH-type transcriptional regulator DctR (dctR) (Shigella flexneri).